A 248-amino-acid polypeptide reads, in one-letter code: Probable transcriptional regulatory protein PP_1214 (248 aa).

Residues 1–21 form a disordered region; the sequence is MAGHSKWANIKHRKERQDAKR.

The protein belongs to the TACO1 family.

The protein resides in the cytoplasm. The polypeptide is Probable transcriptional regulatory protein PP_1214 (Pseudomonas putida (strain ATCC 47054 / DSM 6125 / CFBP 8728 / NCIMB 11950 / KT2440)).